A 284-amino-acid chain; its full sequence is MTAKLIDGKAIAASLRQQIAQCVAERRQQGLRAPGLAVILVGTDPASQVYVSHKRKDCEEVGFHSRAYDLPASTTQGELLSLIDRLNEDSAIDGILVQLPLPVHLDASLLLERIRPDKDVDGFHPYNIGRLAQRMPLLRPCTPKGIMTLLQSTGANLYGLDATVVGASNIVGRPMALELLLAGCTVTVTHRFTRNLAEHVSRADLVIAAAGKPGLVKGEWIKPGAIVIDVGINRLDDGRLVGDVEFSSAAARAEWITPVPGGVGPMTRACLLENTLHAAEQLHR.

Residues 166–168 (GAS) and Ile232 contribute to the NADP(+) site.

This sequence belongs to the tetrahydrofolate dehydrogenase/cyclohydrolase family. Homodimer.

It catalyses the reaction (6R)-5,10-methylene-5,6,7,8-tetrahydrofolate + NADP(+) = (6R)-5,10-methenyltetrahydrofolate + NADPH. The catalysed reaction is (6R)-5,10-methenyltetrahydrofolate + H2O = (6R)-10-formyltetrahydrofolate + H(+). It functions in the pathway one-carbon metabolism; tetrahydrofolate interconversion. Catalyzes the oxidation of 5,10-methylenetetrahydrofolate to 5,10-methenyltetrahydrofolate and then the hydrolysis of 5,10-methenyltetrahydrofolate to 10-formyltetrahydrofolate. The sequence is that of Bifunctional protein FolD from Azotobacter vinelandii (strain DJ / ATCC BAA-1303).